The sequence spans 221 residues: uncharacterized protein (221 aa).

This is an uncharacterized protein from Sinorhizobium fredii (strain NBRC 101917 / NGR234).